The chain runs to 189 residues: GTP cyclohydrolase 1 (189 aa).

Positions 78, 81, and 150 each coordinate Zn(2+).

This sequence belongs to the GTP cyclohydrolase I family. Toroid-shaped homodecamer, composed of two pentamers of five dimers.

The enzyme catalyses GTP + H2O = 7,8-dihydroneopterin 3'-triphosphate + formate + H(+). Its pathway is cofactor biosynthesis; 7,8-dihydroneopterin triphosphate biosynthesis; 7,8-dihydroneopterin triphosphate from GTP: step 1/1. The polypeptide is GTP cyclohydrolase 1 (Listeria innocua serovar 6a (strain ATCC BAA-680 / CLIP 11262)).